We begin with the raw amino-acid sequence, 619 residues long: Laccase (619 aa).

An N-terminal signal peptide occupies residues 1–21 (MKFLGIAALVAGLLAPSLVLG). Positions 22–49 (APAPGTEGVNLLTPVDKRQDSQAERYGG) are excised as a propeptide. A disulfide bridge connects residues Cys55 and Cys63. Plastocyanin-like domains are found at residues 84-207 (TRRY…IVIN) and 216-373 (VDLG…LPTN). A glycan (N-linked (GlcNAc...) asparagine) is linked at Asn139. Cu cation is bound by residues His144, His146, His189, and His191. Intrachain disulfides connect Cys165–Cys586 and Cys349–Cys383. Residues Asn282, Asn295, and Asn340 are each glycosylated (N-linked (GlcNAc...) asparagine). 2 N-linked (GlcNAc...) asparagine glycosylation sites follow: Asn422 and Asn444. Residues 431-566 (NKPVLEYVLT…GGLSNQFLER (136 aa)) enclose the Plastocyanin-like 3 domain. Cu cation-binding residues include His477, His480, His482, His548, Cys549, His550, and His554. Residues 607–619 (RSGVKAREVKMKW) constitute a propeptide that is removed on maturation.

It belongs to the multicopper oxidase family. Requires Cu cation as cofactor.

It localises to the secreted. The catalysed reaction is 4 hydroquinone + O2 = 4 benzosemiquinone + 2 H2O. Functionally, lignin degradation and detoxification of lignin-derived products. This chain is Laccase (lacc), found in Neurospora crassa (strain ATCC 24698 / 74-OR23-1A / CBS 708.71 / DSM 1257 / FGSC 987).